A 58-amino-acid polypeptide reads, in one-letter code: Small ribosomal subunit protein bS21 (58 aa).

Residues 37-58 (FYDKPSVKKRAKSKAAAKYRGR) form a disordered region. Basic residues predominate over residues 43 to 58 (VKKRAKSKAAAKYRGR).

It belongs to the bacterial ribosomal protein bS21 family.

This Chlamydia muridarum (strain MoPn / Nigg) protein is Small ribosomal subunit protein bS21 (rpsU).